The primary structure comprises 1000 residues: Exportin-T (1000 aa).

It belongs to the exportin family.

The protein localises to the nucleus. The protein resides in the cytoplasm. In terms of biological role, tRNA nucleus export receptor which facilitates tRNA translocation across the nuclear pore complex. Involved in pre-tRNA splicing, probably by affecting the interaction of pre-tRNA with splicing endonuclease. The polypeptide is Exportin-T (LOS1) (Debaryomyces hansenii (strain ATCC 36239 / CBS 767 / BCRC 21394 / JCM 1990 / NBRC 0083 / IGC 2968) (Yeast)).